The chain runs to 270 residues: Putative phosphoenolpyruvate synthase regulatory protein (270 aa).

Residue G150–T157 participates in ADP binding.

It belongs to the pyruvate, phosphate/water dikinase regulatory protein family. PSRP subfamily.

It carries out the reaction [pyruvate, water dikinase] + ADP = [pyruvate, water dikinase]-phosphate + AMP + H(+). The catalysed reaction is [pyruvate, water dikinase]-phosphate + phosphate + H(+) = [pyruvate, water dikinase] + diphosphate. Bifunctional serine/threonine kinase and phosphorylase involved in the regulation of the phosphoenolpyruvate synthase (PEPS) by catalyzing its phosphorylation/dephosphorylation. The sequence is that of Putative phosphoenolpyruvate synthase regulatory protein from Shewanella halifaxensis (strain HAW-EB4).